A 349-amino-acid polypeptide reads, in one-letter code: Phosphate acyltransferase (349 aa).

It belongs to the PlsX family. In terms of assembly, homodimer. Probably interacts with PlsY.

It localises to the cytoplasm. The enzyme catalyses a fatty acyl-[ACP] + phosphate = an acyl phosphate + holo-[ACP]. It functions in the pathway lipid metabolism; phospholipid metabolism. Functionally, catalyzes the reversible formation of acyl-phosphate (acyl-PO(4)) from acyl-[acyl-carrier-protein] (acyl-ACP). This enzyme utilizes acyl-ACP as fatty acyl donor, but not acyl-CoA. This chain is Phosphate acyltransferase, found in Akkermansia muciniphila (strain ATCC BAA-835 / DSM 22959 / JCM 33894 / BCRC 81048 / CCUG 64013 / CIP 107961 / Muc).